The primary structure comprises 107 residues: Nucleoid-associated protein A1G_07310 (107 aa).

Belongs to the YbaB/EbfC family. Homodimer.

The protein localises to the cytoplasm. Its subcellular location is the nucleoid. Its function is as follows. Binds to DNA and alters its conformation. May be involved in regulation of gene expression, nucleoid organization and DNA protection. The protein is Nucleoid-associated protein A1G_07310 of Rickettsia rickettsii (strain Sheila Smith).